Here is a 677-residue protein sequence, read N- to C-terminus: UvrABC system protein B (677 aa).

A Helicase ATP-binding domain is found at 24 to 412; it reads EGVLEGVPAQ…EGIVVEQVIR (389 aa). 37 to 44 provides a ligand contact to ATP; the sequence is GVTGSGKT. The Beta-hairpin motif lies at 90–113; the sequence is YYDYYQPEAYLPSSDTYIEKDLAI. Residues 429-591 enclose the Helicase C-terminal domain; the sequence is QIDDLMEEIQ…ITPQQIKKAR (163 aa). Residues 635–670 form the UVR domain; sequence EKSMERTRKLMQEAAKKLEFIEAAQYRDELLKMEDL.

Belongs to the UvrB family. In terms of assembly, forms a heterotetramer with UvrA during the search for lesions. Interacts with UvrC in an incision complex.

The protein resides in the cytoplasm. Its function is as follows. The UvrABC repair system catalyzes the recognition and processing of DNA lesions. A damage recognition complex composed of 2 UvrA and 2 UvrB subunits scans DNA for abnormalities. Upon binding of the UvrA(2)B(2) complex to a putative damaged site, the DNA wraps around one UvrB monomer. DNA wrap is dependent on ATP binding by UvrB and probably causes local melting of the DNA helix, facilitating insertion of UvrB beta-hairpin between the DNA strands. Then UvrB probes one DNA strand for the presence of a lesion. If a lesion is found the UvrA subunits dissociate and the UvrB-DNA preincision complex is formed. This complex is subsequently bound by UvrC and the second UvrB is released. If no lesion is found, the DNA wraps around the other UvrB subunit that will check the other stand for damage. This Bacteroides fragilis (strain ATCC 25285 / DSM 2151 / CCUG 4856 / JCM 11019 / LMG 10263 / NCTC 9343 / Onslow / VPI 2553 / EN-2) protein is UvrABC system protein B.